The sequence spans 207 residues: ATP phosphoribosyltransferase (207 aa).

It belongs to the ATP phosphoribosyltransferase family. Short subfamily. In terms of assembly, heteromultimer composed of HisG and HisZ subunits.

It localises to the cytoplasm. The catalysed reaction is 1-(5-phospho-beta-D-ribosyl)-ATP + diphosphate = 5-phospho-alpha-D-ribose 1-diphosphate + ATP. The protein operates within amino-acid biosynthesis; L-histidine biosynthesis; L-histidine from 5-phospho-alpha-D-ribose 1-diphosphate: step 1/9. Functionally, catalyzes the condensation of ATP and 5-phosphoribose 1-diphosphate to form N'-(5'-phosphoribosyl)-ATP (PR-ATP). Has a crucial role in the pathway because the rate of histidine biosynthesis seems to be controlled primarily by regulation of HisG enzymatic activity. This chain is ATP phosphoribosyltransferase, found in Geobacillus kaustophilus (strain HTA426).